Consider the following 284-residue polypeptide: Extracellular metalloprotease VDBG_01143 (284 aa).

The N-terminal stretch at Met-1–Gly-18 is a signal peptide. Residue Asn-58 is glycosylated (N-linked (GlcNAc...) asparagine). His-200 contributes to the Zn(2+) binding site. Glu-201 is an active-site residue. Position 204 (His-204) interacts with Zn(2+). Cys-236 and Cys-263 are disulfide-bonded.

The protein belongs to the peptidase M43B family.

Its subcellular location is the secreted. Its function is as follows. Secreted metalloproteinase that allows assimilation of proteinaceous substrates. This is Extracellular metalloprotease VDBG_01143 from Verticillium alfalfae (strain VaMs.102 / ATCC MYA-4576 / FGSC 10136) (Verticillium wilt of alfalfa).